Reading from the N-terminus, the 603-residue chain is UvrABC system protein C (603 aa).

Residues 15 to 92 (DQPGCYLMKD…IKKHDPRFNI (78 aa)) form the GIY-YIG domain. In terms of domain architecture, UVR spans 197 to 232 (KTVKNDLMKKMQEAAENMEFEKAGEFRDQINAIETT).

The protein belongs to the UvrC family. Interacts with UvrB in an incision complex.

It localises to the cytoplasm. Functionally, the UvrABC repair system catalyzes the recognition and processing of DNA lesions. UvrC both incises the 5' and 3' sides of the lesion. The N-terminal half is responsible for the 3' incision and the C-terminal half is responsible for the 5' incision. This Listeria monocytogenes serotype 4b (strain F2365) protein is UvrABC system protein C.